A 67-amino-acid chain; its full sequence is Small ribosomal subunit protein eS31 (67 aa).

Zn(2+)-binding residues include C31, C34, C49, and C52. The segment at 31 to 52 (CPKCGAGVFMAEHLNRFACGKC) adopts a C4-type zinc-finger fold.

The protein belongs to the eukaryotic ribosomal protein eS31 family. In terms of assembly, part of the 30S ribosomal subunit. The cofactor is Zn(2+).

This chain is Small ribosomal subunit protein eS31, found in Methanococcus maripaludis (strain C6 / ATCC BAA-1332).